A 475-amino-acid polypeptide reads, in one-letter code: Dihydrolipoyl dehydrogenase (475 aa).

FAD-binding positions include 36–45 (ERYNTLGGVC), K54, and G117. The cysteines at positions 45 and 50 are disulfide-linked. Residues 182–186 (GGGII), E205, V238, and 270–273 (AIGR) each bind NAD(+). FAD-binding residues include D313 and A321. Catalysis depends on H445, which acts as the Proton acceptor.

The protein belongs to the class-I pyridine nucleotide-disulfide oxidoreductase family. The cofactor is FAD.

The protein localises to the cytoplasm. It carries out the reaction N(6)-[(R)-dihydrolipoyl]-L-lysyl-[protein] + NAD(+) = N(6)-[(R)-lipoyl]-L-lysyl-[protein] + NADH + H(+). Functionally, the branched-chain alpha-keto dehydrogenase complex catalyzes the overall conversion of alpha-keto acids to acyl-CoA and CO(2). It contains multiple copies of 3 enzymatic components: branched-chain alpha-keto acid decarboxylase (E1), lipoamide acyltransferase (E2) and lipoamide dehydrogenase (E3). This is Dihydrolipoyl dehydrogenase (lpd) from Vibrio cholerae serotype O1 (strain ATCC 39315 / El Tor Inaba N16961).